The sequence spans 439 residues: Probable cysteine protease atg4 (439 aa).

The segment at 65 to 91 (LSTTETTTPPDSTVGSLESSSEYDNCD) is disordered. Positions 66-77 (STTETTTPPDST) are enriched in low complexity. Polar residues predominate over residues 78-91 (VGSLESSSEYDNCD). Cys-158 functions as the Nucleophile in the catalytic mechanism. Residues Asp-332 and His-334 contribute to the active site.

It belongs to the peptidase C54 family.

It localises to the cytoplasm. It is found in the nucleus. Its subcellular location is the preautophagosomal structure. The enzyme catalyses [protein]-C-terminal L-amino acid-glycyl-phosphatidylethanolamide + H2O = [protein]-C-terminal L-amino acid-glycine + a 1,2-diacyl-sn-glycero-3-phosphoethanolamine. Functionally, cysteine protease that plays a key role in cytoplasm to vacuole transport (Cvt) and autophagy by mediating both proteolytic activation and delipidation of ATG8. Required for selective autophagic degradation of the nucleus (nucleophagy) as well as for mitophagy which contributes to regulate mitochondrial quantity and quality by eliminating the mitochondria to a basal level to fulfill cellular energy requirements and preventing excess ROS production. The protease activity is required for proteolytic activation of ATG8: cleaves the C-terminal amino acid of ATG8 to reveal a C-terminal glycine. ATG8 ubiquitin-like activity requires the exposure of the glycine at the C-terminus for its conjugation to phosphatidylethanolamine (PE) and its insertion to membranes, which is necessary for autophagy. The ATG8-PE conjugate mediates tethering between adjacent membranes and stimulates membrane hemifusion, leading to expansion of the autophagosomal membrane during autophagy. In addition to the protease activity, also catalyzes deconjugation of PE-conjugated forms of ATG8 during macroautophagy: ATG8 delipidation is required to release the protein from membranes, which facilitates multiple events during macroautophagy, and especially for efficient autophagosome biogenesis, the assembly of ATG9-containing tubulovesicular clusters into phagophores/autophagosomes, and for the disassembly of PAS-associated ATG components. ATG8 delipidation by ATG4 also recycles ATG8-PE generated on inappropriate membranes to maintain a reservoir of unlipidated ATG8 that is required for autophagosome formation at the PAS. This Sclerotinia sclerotiorum (strain ATCC 18683 / 1980 / Ss-1) (White mold) protein is Probable cysteine protease atg4 (atg4).